We begin with the raw amino-acid sequence, 506 residues long: Cysteine--tRNA ligase (506 aa).

A Zn(2+)-binding site is contributed by C34. The short motif at 36–46 (PTVYDFAHIGN) is the 'HIGH' region element. C230, H269, and E273 together coordinate Zn(2+). A 'KMSKS' region motif is present at residues 302-306 (KMSKS). K305 lines the ATP pocket.

The protein belongs to the class-I aminoacyl-tRNA synthetase family. As to quaternary structure, monomer. Requires Zn(2+) as cofactor.

It is found in the cytoplasm. It catalyses the reaction tRNA(Cys) + L-cysteine + ATP = L-cysteinyl-tRNA(Cys) + AMP + diphosphate. This Brucella suis biovar 1 (strain 1330) protein is Cysteine--tRNA ligase.